The sequence spans 662 residues: Acetyl-coenzyme A synthetase (662 aa).

CoA-binding positions include 197–200 and T317; that span reads RKGK. ATP contacts are provided by residues 393–395, 417–422, D510, and R525; these read GEP and DTWWQT. A CoA-binding site is contributed by S533. R536 contributes to the ATP binding site. Mg(2+)-binding residues include H549 and V552. Position 623 is an N6-acetyllysine (K623).

Belongs to the ATP-dependent AMP-binding enzyme family. It depends on Mg(2+) as a cofactor. Post-translationally, acetylated. Deacetylation by the SIR2-homolog deacetylase activates the enzyme.

The catalysed reaction is acetate + ATP + CoA = acetyl-CoA + AMP + diphosphate. In terms of biological role, catalyzes the conversion of acetate into acetyl-CoA (AcCoA), an essential intermediate at the junction of anabolic and catabolic pathways. AcsA undergoes a two-step reaction. In the first half reaction, AcsA combines acetate with ATP to form acetyl-adenylate (AcAMP) intermediate. In the second half reaction, it can then transfer the acetyl group from AcAMP to the sulfhydryl group of CoA, forming the product AcCoA. The sequence is that of Acetyl-coenzyme A synthetase from Helicobacter pylori (strain HPAG1).